Consider the following 265-residue polypeptide: Apolipoprotein A-I (265 aa).

An N-terminal signal peptide occupies residues 1–18 (MKAVVLTLAVLFLTGSQA). 2 repeat units span residues 67–88 (LKLL…EQLG) and 89–110 (PVTQ…QEMS). The tract at residues 67 to 265 (LKLLDNWDSL…DEASKKLNAQ (199 aa)) is 10 X approximate tandem repeats. M109 bears the Methionine sulfoxide mark. The stretch at 111 to 121 (KDLEEVKKKVQ) is one 3; half-length repeat. Tandem repeats lie at residues 122–142 (PYLD…RQKM), 144–165 (PLGA…EKLS), 166–187 (PLAE…QHVA), 188–209 (PYSD…EGGG), and 210–230 (SLAE…EKAK). At M135 the chain carries Methionine sulfoxide. The 9; half-length repeat unit spans residues 231 to 241 (PALEDLRQGLL). Residues 242–265 (PVLENLKVSILAAIDEASKKLNAQ) form repeat 10.

It belongs to the apolipoprotein A1/A4/E family. As to quaternary structure, homodimer. Interacts with APOA1BP and CLU. Component of a sperm activating protein complex (SPAP), consisting of APOA1, an immunoglobulin heavy chain, an immunoglobulin light chain and albumin. Interacts with NDRG1. Interacts with SCGB3A2. Interacts with NAXE and YJEFN3. In terms of processing, glycosylated. Palmitoylated. Post-translationally, phosphorylation sites are present in the extracellular medium. Major protein of plasma HDL, also found in chylomicrons. Synthesized predominantly in the intestine and the liver.

It localises to the secreted. Participates in the reverse transport of cholesterol from tissues to the liver for excretion by promoting cholesterol efflux from tissues and by acting as a cofactor for the lecithin cholesterol acyltransferase (LCAT). As part of the SPAP complex, activates spermatozoa motility. The protein is Apolipoprotein A-I (APOA1) of Sus scrofa (Pig).